Consider the following 820-residue polypeptide: Probable protease Ga0182885_104520 (820 aa).

The protein belongs to the peptidase C25 family.

Its function is as follows. Probably a dedicated protease for substrate gasdermin bGSDM; cleaves the bGSDM precursor, releasing the pore-forming moiety, which integrates into the membrane and triggers cell death. Involved in defense against bacteriophages. Expression of bacterial gasdermin (bGSDM) and this neighboring protease is toxic in E.coli. The protein is Probable protease Ga0182885_104520 of Desulfuromonadales bacterium.